We begin with the raw amino-acid sequence, 198 residues long: Urease accessory protein UreE (198 aa).

A disordered region spans residues 137-198 (ARGAYHSPGG…RGHDHDHKHD (62 aa)). Residues 149 to 198 (HGHDHDHNHDHGHDHAHDHNHGHDHDHEHGYEHEHEHRHDRGHDHDHKHD) show a composition bias toward basic and acidic residues.

This sequence belongs to the UreE family.

It localises to the cytoplasm. Involved in urease metallocenter assembly. Binds nickel. Probably functions as a nickel donor during metallocenter assembly. This is Urease accessory protein UreE from Rhizobium johnstonii (strain DSM 114642 / LMG 32736 / 3841) (Rhizobium leguminosarum bv. viciae).